The chain runs to 431 residues: RbAp48-related WD40 repeat-containing protein prw1 (431 aa).

WD repeat units lie at residues 127-159 (SHPE…LVFD), 182-213 (KHTQ…SCWD), 232-263 (SHEK…HVHD), 279-310 (AHSG…ALWD), 323-354 (GHED…LVWD), and 380-411 (GHTS…QIWT).

This sequence belongs to the WD repeat HIR1 family. In terms of assembly, heterotetramer of alp13, clr6, prw1 and pst2.

It localises to the nucleus. Its function is as follows. Has a role in chromatin assembly and chromosome segregation. Involved in the deacetylation of histones. This chain is RbAp48-related WD40 repeat-containing protein prw1 (prw1), found in Schizosaccharomyces pombe (strain 972 / ATCC 24843) (Fission yeast).